Consider the following 410-residue polypeptide: Lissencephaly-1 homolog (410 aa).

One can recognise a LisH domain in the interval 7–39; that stretch reads QQEELQLAVHAYLVEAGHAEAAAAMAKSANLGD. Positions 55 to 80 form a coiled coil; it reads TTITRLQKRNMELQAEVEELRSSARA. 7 WD repeats span residues 104–143, 146–185, 188–227, 230–269, 294–333, 336–375, and 378–410; these read GHRL…FERS, GHTN…CTKT, GHDH…CLQT, GHSD…CKHV, MIFG…HLAR, GHDN…VSKT, and AHNH…WECN.

This sequence belongs to the WD repeat LIS1/nudF family.

Its subcellular location is the cytoplasm. The protein resides in the cytoskeleton. It localises to the microtubule organizing center. The protein localises to the centrosome. Functionally, positively regulates the activity of the minus-end directed microtubule motor protein dynein. May enhance dynein-mediated microtubule sliding by targeting dynein to the microtubule plus end. Required for several dynein- and microtubule-dependent processes. The polypeptide is Lissencephaly-1 homolog (Monosiga brevicollis (Choanoflagellate)).